Here is a 71-residue protein sequence, read N- to C-terminus: Large ribosomal subunit protein uL29 (71 aa).

It belongs to the universal ribosomal protein uL29 family.

The chain is Large ribosomal subunit protein uL29 (rpl29) from Aeropyrum pernix (strain ATCC 700893 / DSM 11879 / JCM 9820 / NBRC 100138 / K1).